Reading from the N-terminus, the 203-residue chain is Small ribosomal subunit protein uS4 (203 aa).

The S4 RNA-binding domain maps to 93–156 (RRLDNVVYRL…LKVPAILEAV (64 aa)).

The protein belongs to the universal ribosomal protein uS4 family. Part of the 30S ribosomal subunit. Contacts protein S5. The interaction surface between S4 and S5 is involved in control of translational fidelity.

In terms of biological role, one of the primary rRNA binding proteins, it binds directly to 16S rRNA where it nucleates assembly of the body of the 30S subunit. Its function is as follows. With S5 and S12 plays an important role in translational accuracy. The protein is Small ribosomal subunit protein uS4 of Streptococcus sanguinis (strain SK36).